A 277-amino-acid chain; its full sequence is Large ribosomal subunit protein uL2c (277 aa).

Disordered stretches follow at residues 36 to 56 (NKHS…HRGG) and 225 to 259 (MNSV…GSKS).

It belongs to the universal ribosomal protein uL2 family. Part of the 50S ribosomal subunit.

The protein localises to the plastid. The protein resides in the chloroplast. The polypeptide is Large ribosomal subunit protein uL2c (rpl2) (Psilotum nudum (Whisk fern)).